The sequence spans 186 residues: ADP-ribosylation factor-like protein 8B-A (186 aa).

Residues 1–19 (MLALINRLLDWFKSLFWKE) constitute an intramembrane region (note=Mediates targeting to membranes). GTP-binding positions include 29-35 (QYSGKTT), 71-75 (DIGGQ), and 130-133 (NKRD).

This sequence belongs to the small GTPase superfamily. Arf family.

It is found in the late endosome membrane. It localises to the lysosome membrane. The protein resides in the cytoplasm. Its subcellular location is the cytoskeleton. The protein localises to the spindle. It is found in the early endosome membrane. Functionally, small GTPase which cycles between active GTP-bound and inactive GDP-bound states. In its active state, binds to a variety of effector proteins playing a key role in the regulation of lysosomal positioning which is important for nutrient sensing, natural killer cell-mediated cytotoxicity and antigen presentation. Along with its effectors, orchestrates lysosomal transport and fusion. The protein is ADP-ribosylation factor-like protein 8B-A (arl8ba) of Danio rerio (Zebrafish).